We begin with the raw amino-acid sequence, 506 residues long: Aldehyde dehydrogenase [NAD(P)+] 1 (506 aa).

Glu-268 serves as the catalytic Proton acceptor. The active-site Nucleophile is Cys-302.

This sequence belongs to the aldehyde dehydrogenase family.

It is found in the cytoplasm. The catalysed reaction is an aldehyde + NAD(+) + H2O = a carboxylate + NADH + 2 H(+). The enzyme catalyses 3-aminopropanal + NAD(+) + H2O = beta-alanine + NADH + 2 H(+). Its function is as follows. Cytoplasmic aldehyde dehydrogenase involved in ethanol oxidation. Required for pantothenic acid production through the conversion of 3-aminopropanal to beta-alanine, an intermediate in pantothenic acid (vitamin B5) and coenzyme A (CoA) biosynthesis. In Saccharomyces cerevisiae (strain ATCC 204508 / S288c) (Baker's yeast), this protein is Aldehyde dehydrogenase [NAD(P)+] 1 (ALD2).